We begin with the raw amino-acid sequence, 284 residues long: Tropomyosin-2 (284 aa).

Residues 1–284 are a coiled coil; that stretch reads MDAIKKKMQA…DQTFAELTGY (284 aa). The disordered stretch occupies residues 82-110; sequence ESEVATQNRKVQQIEEDLEKSEERSTTAQ.

This sequence belongs to the tropomyosin family. As to quaternary structure, homodimer.

Tropomyosin, in association with the troponin complex, plays a central role in the calcium dependent regulation of muscle contraction. May also regulate motor systems required to maintain nuclear integrity and apico-basal polarity during embryogenesis. In Drosophila melanogaster (Fruit fly), this protein is Tropomyosin-2 (Tm2).